The primary structure comprises 294 residues: RNA exonuclease 4 (294 aa).

Residues 1–13 show a composition bias toward polar residues; it reads MVLSSNWLSLQKS. The tract at residues 1–56 is disordered; the sequence is MVLSSNWLSLQKSTDSDSVNKNKGGKKTKSNSKKRTVSVKKDKQYVDKKKKNGTGS. Residues 23–38 are compositionally biased toward basic residues; sequence KGGKKTKSNSKKRTVS. An Exonuclease domain is found at 119-271; that stretch reads YVSMDCEFVG…EDARATMLLY (153 aa).

The protein belongs to the REXO4 family.

The protein resides in the nucleus. Its function is as follows. Exoribonuclease involved in ribosome biosynthesis. Involved in the processing of ITS1, the internal transcribed spacer localized between the 18S and 5.8S rRNAs. This chain is RNA exonuclease 4 (REX4), found in Kluyveromyces lactis (strain ATCC 8585 / CBS 2359 / DSM 70799 / NBRC 1267 / NRRL Y-1140 / WM37) (Yeast).